Reading from the N-terminus, the 480-residue chain is Reticulophagy regulator 1 (480 aa).

Residues 1-10 are compositionally biased toward basic and acidic residues; the sequence is MASPAPEEHA. The tract at residues 1–41 is disordered; the sequence is MASPAPEEHATQGCPATEEQEPRPGVPGEEAGPEGAGPQVE. At 1 to 43 the chain is on the cytoplasmic side; that stretch reads MASPAPEEHATQGCPATEEQEPRPGVPGEEAGPEGAGPQVEEA. The helical transmembrane segment at 44-64 threads the bilayer; sequence AGRVAAALTWLLGEPVLWLGW. Over 65–78 the chain is Lumenal; that stretch reads RADELLSWKRPLRS. Positions 67-216 are reticulon homology domain; the sequence is DELLSWKRPL…LLFAFLCPLF (150 aa). A helical membrane pass occupies residues 79 to 99; the sequence is LLAFLGANLLFWFLALTPWRV. Over 100 to 101 the chain is Cytoplasmic; that stretch reads YH. A helical membrane pass occupies residues 102–122; the sequence is LISVMILGRVIMQIIKDMVLS. The Lumenal segment spans residues 123–191; it reads RARGAQLWRS…LVCSVCTFFT (69 aa). Position 132 is a phosphoserine (serine 132). Serine 134 bears the Phosphoserine; by CAMK2B mark. Phosphoserine is present on serine 136. Residues 192–212 form a helical membrane-spanning segment; sequence ILGSYIPGVILSYLLLLFAFL. Topologically, residues 213–480 are cytoplasmic; the sequence is CPLFKCNDIG…GFLSNLLGGH (268 aa). The span at 302–313 shows a compositional bias: polar residues; sequence FNLSEGYTPQTD. The tract at residues 302-348 is disordered; the sequence is FNLSEGYTPQTDTSDDLDRPSEEVFSRDLSDFPSLENGAGTNDEDEL. Over residues 317–331 the composition is skewed to basic and acidic residues; it reads DLDRPSEEVFSRDLS. Residues 436–441 carry the LIR motif motif; the sequence is DDFELL. The interval 450–480 is disordered; that stretch reads ESELGLTQDQGAEAQQSKKSSGFLSNLLGGH. The span at 454 to 473 shows a compositional bias: polar residues; it reads GLTQDQGAEAQQSKKSSGFL.

It belongs to the RETREG family. Homooligomer; oligomerization is enhanced following endoplasmic reticulum stress and is mediated by the reticulon homology domain. Interacts with ATG8 family modifier proteins MAP1LC3A, MAP1LC3B, GABARAP, GABARAPL1 and GABARAPL2. Post-translationally, phosphorylation at Ser-134 by CAMK2B enhances oligomerization and membrane scission and reticulophagy activity.

Its subcellular location is the golgi apparatus. The protein resides in the cis-Golgi network membrane. It localises to the endoplasmic reticulum membrane. In terms of biological role, endoplasmic reticulum (ER)-anchored autophagy regulator which mediates ER delivery into lysosomes through sequestration into autophagosomes. Promotes membrane remodeling and ER scission via its membrane bending capacity and targets the fragments into autophagosomes via interaction with ATG8 family proteins. Active under basal conditions. Required for collagen quality control in a LIR motif-dependent manner. Required for long-term survival of nociceptive and autonomic ganglion neurons. This Rattus norvegicus (Rat) protein is Reticulophagy regulator 1.